Reading from the N-terminus, the 427-residue chain is Glutamyl-tRNA reductase (427 aa).

Residues 49–52, serine 105, 110–112, and glutamine 116 contribute to the substrate site; these read TCNR and EPQ. Residue cysteine 50 is the Nucleophile of the active site. Residue 185–190 coordinates NADP(+); that stretch reads AAGEMN.

This sequence belongs to the glutamyl-tRNA reductase family. Homodimer.

The enzyme catalyses (S)-4-amino-5-oxopentanoate + tRNA(Glu) + NADP(+) = L-glutamyl-tRNA(Glu) + NADPH + H(+). Its pathway is porphyrin-containing compound metabolism; protoporphyrin-IX biosynthesis; 5-aminolevulinate from L-glutamyl-tRNA(Glu): step 1/2. Catalyzes the NADPH-dependent reduction of glutamyl-tRNA(Glu) to glutamate 1-semialdehyde (GSA). The polypeptide is Glutamyl-tRNA reductase (Acinetobacter baumannii (strain AB307-0294)).